The chain runs to 1405 residues: DNA-directed RNA polymerase subunit beta' (1405 aa).

Zn(2+) contacts are provided by Cys-70, Cys-72, Cys-85, and Cys-88. Mg(2+)-binding residues include Asp-460, Asp-462, and Asp-464. 4 residues coordinate Zn(2+): Cys-815, Cys-889, Cys-896, and Cys-899. Residues 1363-1388 (LAHHAERRRRREDPESTANPSAFDVE) form a disordered region.

This sequence belongs to the RNA polymerase beta' chain family. As to quaternary structure, the RNAP catalytic core consists of 2 alpha, 1 beta, 1 beta' and 1 omega subunit. When a sigma factor is associated with the core the holoenzyme is formed, which can initiate transcription. The cofactor is Mg(2+). Requires Zn(2+) as cofactor.

The enzyme catalyses RNA(n) + a ribonucleoside 5'-triphosphate = RNA(n+1) + diphosphate. Functionally, DNA-dependent RNA polymerase catalyzes the transcription of DNA into RNA using the four ribonucleoside triphosphates as substrates. The chain is DNA-directed RNA polymerase subunit beta' from Chromohalobacter salexigens (strain ATCC BAA-138 / DSM 3043 / CIP 106854 / NCIMB 13768 / 1H11).